The following is a 327-amino-acid chain: Zinc finger C2HC domain-containing protein 1A (327 aa).

The segment at 13 to 42 (ELVPCKICGRSFFPKVLKKHVPICQKTAAK) adopts a C2HC/C3H-type 1 zinc-finger fold. The Zn(2+) site is built by C17, C20, H32, and C36. 2 disordered regions span residues 40-96 (AAKR…KHEE) and 108-131 (NQVI…DYIQ). Positions 46 to 56 (VFDSGRQRAEG) are enriched in basic and acidic residues. A compositionally biased stretch (low complexity) spans 63-76 (KPIKPKLQSSSSSS). The span at 116–125 (PLPPPPPPSY) shows a compositional bias: pro residues. The segment at 128–157 (DYIQCPYCQRRFGENAADRHIKFCKEQASR) adopts a C2HC/C3H-type 2 zinc-finger fold. Zn(2+)-binding residues include C132, C135, H147, and C151. The tract at residues 154–271 (QASRISNKSK…NPSTGIGMNK (118 aa)) is disordered. Residues 187–199 (NSPTASSVSSRLP) are compositionally biased toward polar residues. Residues 211–229 (GIPSSKPSSTGSIKSTPSG) are compositionally biased toward low complexity. 2 stretches are compositionally biased toward polar residues: residues 233 to 245 (LRNN…SPPS) and 255 to 267 (VSQS…STGI).

Belongs to the ZC2HC1 family. Requires Zn(2+) as cofactor.

This is Zinc finger C2HC domain-containing protein 1A (zc2hc1a) from Danio rerio (Zebrafish).